The sequence spans 92 residues: Ribonuclease P protein component 1 (92 aa).

It belongs to the eukaryotic/archaeal RNase P protein component 1 family. As to quaternary structure, consists of a catalytic RNA component and at least 4-5 protein subunits.

It is found in the cytoplasm. The enzyme catalyses Endonucleolytic cleavage of RNA, removing 5'-extranucleotides from tRNA precursor.. In terms of biological role, part of ribonuclease P, a protein complex that generates mature tRNA molecules by cleaving their 5'-ends. The chain is Ribonuclease P protein component 1 from Desulfurococcus amylolyticus (strain DSM 18924 / JCM 16383 / VKM B-2413 / 1221n) (Desulfurococcus kamchatkensis).